A 193-amino-acid polypeptide reads, in one-letter code: Ribose 1,5-bisphosphate phosphokinase PhnN (193 aa).

9–16 (GPSGAGKD) provides a ligand contact to ATP.

This sequence belongs to the ribose 1,5-bisphosphokinase family.

The catalysed reaction is alpha-D-ribose 1,5-bisphosphate + ATP = 5-phospho-alpha-D-ribose 1-diphosphate + ADP. Its pathway is metabolic intermediate biosynthesis; 5-phospho-alpha-D-ribose 1-diphosphate biosynthesis; 5-phospho-alpha-D-ribose 1-diphosphate from D-ribose 5-phosphate (route II): step 3/3. Its function is as follows. Catalyzes the phosphorylation of ribose 1,5-bisphosphate to 5-phospho-D-ribosyl alpha-1-diphosphate (PRPP). The protein is Ribose 1,5-bisphosphate phosphokinase PhnN of Yersinia pestis.